The sequence spans 428 residues: Serine--tRNA ligase (428 aa).

An L-serine-binding site is contributed by 235-237 (TAE). An ATP-binding site is contributed by 266-268 (RSE). E289 lines the L-serine pocket. 353-356 (EISS) contacts ATP. An L-serine-binding site is contributed by S389.

It belongs to the class-II aminoacyl-tRNA synthetase family. Type-1 seryl-tRNA synthetase subfamily. In terms of assembly, homodimer. The tRNA molecule binds across the dimer.

It is found in the cytoplasm. The catalysed reaction is tRNA(Ser) + L-serine + ATP = L-seryl-tRNA(Ser) + AMP + diphosphate + H(+). The enzyme catalyses tRNA(Sec) + L-serine + ATP = L-seryl-tRNA(Sec) + AMP + diphosphate + H(+). It functions in the pathway aminoacyl-tRNA biosynthesis; selenocysteinyl-tRNA(Sec) biosynthesis; L-seryl-tRNA(Sec) from L-serine and tRNA(Sec): step 1/1. Functionally, catalyzes the attachment of serine to tRNA(Ser). Is also able to aminoacylate tRNA(Sec) with serine, to form the misacylated tRNA L-seryl-tRNA(Sec), which will be further converted into selenocysteinyl-tRNA(Sec). The chain is Serine--tRNA ligase from Pasteurella multocida (strain Pm70).